A 206-amino-acid polypeptide reads, in one-letter code: Halorhodopsin (206 aa).

A helical transmembrane segment spans residues 1–15; sequence IALAGLSILLFVYMG. The Cytoplasmic segment spans residues 16–21; sequence RNVEDP. A helical membrane pass occupies residues 22-45; it reads RAQLIFVATLMVPLVSISSYTGLV. The Extracellular segment spans residues 46–75; sequence SGLTVGFLEMPAGHALAGMGAGPEGGVFTP. A helical membrane pass occupies residues 76–97; it reads WGRYLTWAFSTPMILIALGLLA. At 98–100 the chain is on the cytoplasmic side; that stretch reads GSN. A helical transmembrane segment spans residues 101–124; sequence MSKLFTAVVADVGMCITGLAAALT. At 125 to 127 the chain is on the extracellular side; it reads TSS. The helical transmembrane segment at 128–150 threads the bilayer; that stretch reads YLLRWVWYGISCAFFVVVLYILL. Residues 151–162 are Cytoplasmic-facing; the sequence is AEWAKDAEVAGT. The helical transmembrane segment at 163–186 threads the bilayer; sequence ADIFNTLKVLTVVLWLGYPIFWAL. Over 187-195 the chain is Extracellular; sequence GAEGLAVLD. Residues 196-206 traverse the membrane as a helical segment; sequence IAITSWAYSGM.

It belongs to the archaeal/bacterial/fungal opsin family.

Its subcellular location is the cell membrane. Light-driven chloride pump. The protein is Halorhodopsin (hop) of Halobacterium halobium (strain mex).